Consider the following 218-residue polypeptide: Thiopurine S-methyltransferase (218 aa).

Residues Trp10, Leu45, Glu66, and Arg123 each contribute to the S-adenosyl-L-methionine site.

Belongs to the class I-like SAM-binding methyltransferase superfamily. TPMT family.

The protein localises to the cytoplasm. The catalysed reaction is S-adenosyl-L-methionine + a thiopurine = S-adenosyl-L-homocysteine + a thiopurine S-methylether.. The polypeptide is Thiopurine S-methyltransferase (Shewanella sp. (strain W3-18-1)).